The following is a 462-amino-acid chain: Mitochondrial-processing peptidase subunit beta (462 aa).

The N-terminal 20 residues, 1-20 (MFSRTASKFRNTRRLLSTIS), are a transit peptide targeting the mitochondrion. Residue His-70 participates in Zn(2+) binding. Glu-73 serves as the catalytic Proton acceptor. 2 residues coordinate Zn(2+): His-74 and Glu-150. A Phosphoserine modification is found at Ser-243.

This sequence belongs to the peptidase M16 family. Heterodimer of MAS2 (alpha) and MAS1 (beta) subunits, forming the mitochondrial processing protease (MPP) in which MAS2 is involved in substrate recognition and binding and MAS1 is the catalytic subunit. It depends on Zn(2+) as a cofactor.

Its subcellular location is the mitochondrion matrix. It carries out the reaction Release of N-terminal transit peptides from precursor proteins imported into the mitochondrion, typically with Arg in position P2.. Its activity is regulated as follows. Binding to MAS2 is required for catalytic activity. Inhibited by high levels (&gt; 1uM) of zinc. Inhibited by metal chelators ethylenediaminetetraacetic acid (EDTA) and O-phenanthroline. In terms of biological role, catalytic subunit of the essential mitochondrial processing protease (MPP), which cleaves the mitochondrial sequence off newly imported precursors proteins. Preferentially, cleaves after an arginine at position P2. In Saccharomyces cerevisiae (strain ATCC 204508 / S288c) (Baker's yeast), this protein is Mitochondrial-processing peptidase subunit beta.